The primary structure comprises 472 residues: UDP-N-acetylmuramate--L-alanine ligase (472 aa).

122–128 (GSHGKTT) provides a ligand contact to ATP.

It belongs to the MurCDEF family.

The protein resides in the cytoplasm. It catalyses the reaction UDP-N-acetyl-alpha-D-muramate + L-alanine + ATP = UDP-N-acetyl-alpha-D-muramoyl-L-alanine + ADP + phosphate + H(+). It functions in the pathway cell wall biogenesis; peptidoglycan biosynthesis. Its function is as follows. Cell wall formation. The protein is UDP-N-acetylmuramate--L-alanine ligase of Myxococcus xanthus (strain DK1622).